The chain runs to 510 residues: Cytochrome P450 monooxygenase penQ (510 aa).

The chain crosses the membrane as a helical span at residues 9-26 (WIVTLIVAATTYCTLRWV). N-linked (GlcNAc...) asparagine glycosylation is found at Asn148 and Asn341. Cys448 contributes to the heme binding site. Asn482 carries an N-linked (GlcNAc...) asparagine glycan.

Belongs to the cytochrome P450 family. It depends on heme as a cofactor.

Its subcellular location is the membrane. The protein operates within secondary metabolite biosynthesis. Its function is as follows. Cytochrome P450 monooxygenase; part of the gene cluster that mediates the biosynthesis of the indole diterpenes penitrems. The geranylgeranyl diphosphate (GGPP) synthase penG catalyzes the first step in penitrem biosynthesis via conversion of farnesyl pyrophosphate and isopentyl pyrophosphate into geranylgeranyl pyrophosphate (GGPP). Condensation of indole-3-glycerol phosphate with GGPP by the prenyl transferase penC then forms 3-geranylgeranylindole (3-GGI). Epoxidation by the FAD-dependent monooxygenase penM leads to a epoxidized-GGI that is substrate of the terpene cyclase penB for cyclization to yield paspaline. Paspaline is subsequently converted to 13-desoxypaxilline by the cytochrome P450 monooxygenase penP, the latter being then converted to paxilline by the cytochrome P450 monooxygenase penQ. Paxilline is converted to beta-paxitriol via C-10 ketoreduction by the short-chain dehydrogenase PC-15 which can be monoprenylated at the C-20 by the indole diterpene prenyltransferase penD. A two-step elimination (acetylation and elimination) process performed by the O-acetyltransferase PC-16 and the P.simplicissimum ptmI-ortholog not yet identified in P.crustosum, leads to the production of the prenylated form of penijanthine. The FAD-linked oxidoreductase ptmO then converts the prenylated form of penijanthine into PC-M5 which is in turn transformed into PC-M4 by the aromatic dimethylallyltransferase PC-22. A series of oxidation steps involving 4 cytochrome P450 monooxygenases (PC-21, PC-05, PC-23, PC-20) and a FAD-dependent monooxygenase (PC-14) are required for the transformation of PC-M4 to penitrems A and E. Synthesis of these final products is proposed to proceed via penitrems D and C (PC-21, PC-05, PC-14) and penitrems B and F (PC-21, PC-05, PC-14, PC-23). This is Cytochrome P450 monooxygenase penQ from Penicillium crustosum (Blue mold fungus).